A 75-amino-acid chain; its full sequence is Antimicrobial peptide ctriporin (75 aa).

An N-terminal signal peptide occupies residues 1-22; that stretch reads MDSKYLFVFLIFNVIVIDLCQG. Lys41 is modified (lysine amide). Residues 47-75 constitute a propeptide that is removed on maturation; that stretch reads ELGSQYDYLQDFRKRELDLDDLLSKFPDY.

The protein belongs to the non-disulfide-bridged peptide (NDBP) superfamily. Short antimicrobial peptide (group 4) family. As to expression, expressed by the venom gland.

Its subcellular location is the secreted. It localises to the target cell membrane. In terms of biological role, antimicrobial peptide that acts by breaking the cell wall. Is active against Gram-positive bacteria, fungi and antibiotic-resistant pathogens: S.aureus (MIC=5 ug/ml), M.luteus (MIC=5 ug/ml), B.thuringiensis (MIC=10 ug/ml), B.subtilis (MIC=10 ug/ml), C.albicans (MIC=20 ug/ml), methicillin-resistant S.aureus (MIC=5-10 ug/ml), and penicillin-resistant S.epidermidis (MIC=10 ug/ml). Also shows potent activity against antibiotic-sensitive and -resistant Acinetobacter baumannii (MIC=10-20 uM). Shows cytolytic activity against human erythrocytes. In vivo, is efficient in curing staphylococcal skin infection in mice, when externally applied. The protein is Antimicrobial peptide ctriporin of Chaerilus tricostatus (Scorpion).